Reading from the N-terminus, the 62-residue chain is MTTLFQLSVFALIILSFLLVIGVPVVLASPDGWSTRKNTVFSGASLWIGLVFLVGILNSFIS.

The next 2 helical transmembrane spans lie at 8-28 (SVFA…VVLA) and 41-61 (FSGA…NSFI).

Belongs to the PsbZ family. PSII is composed of 1 copy each of membrane proteins PsbA, PsbB, PsbC, PsbD, PsbE, PsbF, PsbH, PsbI, PsbJ, PsbK, PsbL, PsbM, PsbT, PsbY, PsbZ, Psb30/Ycf12, at least 3 peripheral proteins of the oxygen-evolving complex and a large number of cofactors. It forms dimeric complexes.

The protein resides in the plastid. It is found in the chloroplast thylakoid membrane. Functionally, may control the interaction of photosystem II (PSII) cores with the light-harvesting antenna, regulates electron flow through the 2 photosystem reaction centers. PSII is a light-driven water plastoquinone oxidoreductase, using light energy to abstract electrons from H(2)O, generating a proton gradient subsequently used for ATP formation. This Staurastrum punctulatum (Green alga) protein is Photosystem II reaction center protein Z.